The sequence spans 208 residues: LexA repressor (208 aa).

Positions valine 30–serine 50 form a DNA-binding region, H-T-H motif. Residues serine 129 and lysine 167 each act as for autocatalytic cleavage activity in the active site.

This sequence belongs to the peptidase S24 family. In terms of assembly, homodimer.

It carries out the reaction Hydrolysis of Ala-|-Gly bond in repressor LexA.. Functionally, represses a number of genes involved in the response to DNA damage (SOS response), including recA and lexA. In the presence of single-stranded DNA, RecA interacts with LexA causing an autocatalytic cleavage which disrupts the DNA-binding part of LexA, leading to derepression of the SOS regulon and eventually DNA repair. This chain is LexA repressor, found in Lactobacillus acidophilus (strain ATCC 700396 / NCK56 / N2 / NCFM).